Here is a 242-residue protein sequence, read N- to C-terminus: Aspartate/glutamate leucyltransferase (242 aa).

Belongs to the R-transferase family. Bpt subfamily.

It is found in the cytoplasm. It catalyses the reaction N-terminal L-glutamyl-[protein] + L-leucyl-tRNA(Leu) = N-terminal L-leucyl-L-glutamyl-[protein] + tRNA(Leu) + H(+). The enzyme catalyses N-terminal L-aspartyl-[protein] + L-leucyl-tRNA(Leu) = N-terminal L-leucyl-L-aspartyl-[protein] + tRNA(Leu) + H(+). Functions in the N-end rule pathway of protein degradation where it conjugates Leu from its aminoacyl-tRNA to the N-termini of proteins containing an N-terminal aspartate or glutamate. The polypeptide is Aspartate/glutamate leucyltransferase (Alcanivorax borkumensis (strain ATCC 700651 / DSM 11573 / NCIMB 13689 / SK2)).